Reading from the N-terminus, the 258-residue chain is Indole-3-glycerol phosphate synthase (258 aa).

Belongs to the TrpC family.

The enzyme catalyses 1-(2-carboxyphenylamino)-1-deoxy-D-ribulose 5-phosphate + H(+) = (1S,2R)-1-C-(indol-3-yl)glycerol 3-phosphate + CO2 + H2O. It participates in amino-acid biosynthesis; L-tryptophan biosynthesis; L-tryptophan from chorismate: step 4/5. In Geobacillus thermodenitrificans (strain NG80-2), this protein is Indole-3-glycerol phosphate synthase.